Consider the following 148-residue polypeptide: MKVIFLKDVKGKGKKGETKNVADGYANNFLIKNGYAVEANNAALSTLSAQKKKEDKLAAEELAEAKALKEKMENLTVELKAKSGEGGRLFGSITSKQIAQTLEKTHGIKIDKRKMDLPEAIRALGHTKVPVKLHHEVTATLDVHVSEE.

This sequence belongs to the bacterial ribosomal protein bL9 family.

Functionally, binds to the 23S rRNA. The chain is Large ribosomal subunit protein bL9 from Listeria monocytogenes serotype 4b (strain CLIP80459).